Reading from the N-terminus, the 53-residue chain is MAVPKKRTSTSKKRIRKNIWKKKGYWTALKAFSLGKSLSTGNSKSFFVQQTNK.

Belongs to the bacterial ribosomal protein bL32 family.

Its subcellular location is the plastid. It localises to the chloroplast. This is Large ribosomal subunit protein bL32c from Coffea arabica (Arabian coffee).